Consider the following 489-residue polypeptide: Protein-export membrane protein SecD (489 aa).

6 consecutive transmembrane segments (helical) span residues 17-37 (VLIV…IPPA), 328-348 (FIQI…AFMV), 356-376 (SIVV…LGIA), 384-404 (LASI…LVVI), 428-448 (LGII…LALM), and 450-470 (LSTL…GVIF).

Belongs to the SecD/SecF family. SecD subfamily. In terms of assembly, part of the protein translocation apparatus. Forms a complex with SecF.

It localises to the cell membrane. Involved in protein export. This Methanolacinia petrolearia (strain DSM 11571 / OCM 486 / SEBR 4847) (Methanoplanus petrolearius) protein is Protein-export membrane protein SecD.